A 131-amino-acid chain; its full sequence is Profilin-2 (131 aa).

Cysteines 13 and 115 form a disulfide. An Involved in PIP2 interaction motif is present at residues 81–97 (AVIRGKKGSGGITVKKT). Threonine 111 carries the phosphothreonine modification.

This sequence belongs to the profilin family. In terms of assembly, occurs in many kinds of cells as a complex with monomeric actin in a 1:1 ratio. Post-translationally, phosphorylated by MAP kinases. Pollen specific.

It is found in the cytoplasm. It localises to the cytoskeleton. Binds to actin and affects the structure of the cytoskeleton. At high concentrations, profilin prevents the polymerization of actin, whereas it enhances it at low concentrations. By binding to PIP2, it inhibits the formation of IP3 and DG. This chain is Profilin-2 (PRO2), found in Zea mays (Maize).